Here is a 964-residue protein sequence, read N- to C-terminus: Translation initiation factor IF-2 (964 aa).

The disordered stretch occupies residues 49 to 357 (QIGSAEPADD…QEFDEMQAPL (309 aa)). The segment covering 62–85 (AKPAARKSQTSSKKTSKETTTAKP) has biased composition (low complexity). Over residues 86 to 102 (APGPKPGPGPKPTPGPR) the composition is skewed to pro residues. Positions 103–117 (PGSSSGPKPGRSSAA) are enriched in low complexity. Residues 159–169 (PHAPAPKPKPG) are compositionally biased toward pro residues. Low complexity-rich tracts occupy residues 190 to 212 (GLPS…APRP) and 242 to 251 (GQGERMPRPG). Composition is skewed to gly residues over residues 252–261 (GSQGSRGGSG) and 284–334 (GRGG…GRGG). A compositionally biased stretch (basic residues) spans 335-346 (GGRRGRKSRKQR). The 172-residue stretch at 458–629 (ARPPVVTVMG…AIVLTADAAL (172 aa)) folds into the tr-type G domain. The tract at residues 467-474 (GHVDHGKT) is G1. 467-474 (GHVDHGKT) lines the GTP pocket. Residues 492 to 496 (GITQA) form a G2 region. Positions 517–520 (DTPG) are G3. GTP-binding positions include 517-521 (DTPGH) and 571-574 (NKID). Positions 571 to 574 (NKID) are G4. The tract at residues 607–609 (SAR) is G5.

Belongs to the TRAFAC class translation factor GTPase superfamily. Classic translation factor GTPase family. IF-2 subfamily.

The protein resides in the cytoplasm. Its function is as follows. One of the essential components for the initiation of protein synthesis. Protects formylmethionyl-tRNA from spontaneous hydrolysis and promotes its binding to the 30S ribosomal subunits. Also involved in the hydrolysis of GTP during the formation of the 70S ribosomal complex. The sequence is that of Translation initiation factor IF-2 from Cutibacterium acnes (strain DSM 16379 / KPA171202) (Propionibacterium acnes).